We begin with the raw amino-acid sequence, 320 residues long: tRNA dimethylallyltransferase (320 aa).

Position 16 to 23 (16 to 23) interacts with ATP; the sequence is GPTASGKT. A substrate-binding site is contributed by 18 to 23; the sequence is TASGKT. Interaction with substrate tRNA stretches follow at residues 41–44, 165–169, and 247–252; these read DSAL, QRIQR, and RCVGYR.

This sequence belongs to the IPP transferase family. Monomer. Requires Mg(2+) as cofactor.

The catalysed reaction is adenosine(37) in tRNA + dimethylallyl diphosphate = N(6)-dimethylallyladenosine(37) in tRNA + diphosphate. Functionally, catalyzes the transfer of a dimethylallyl group onto the adenine at position 37 in tRNAs that read codons beginning with uridine, leading to the formation of N6-(dimethylallyl)adenosine (i(6)A). This is tRNA dimethylallyltransferase from Azoarcus sp. (strain BH72).